The primary structure comprises 243 residues: Thiocyanate hydrolase subunit gamma (243 aa).

Residues Cys128, Cys131, Ser132, and Cys133 each coordinate Co(3+). Position 131 is a cysteine sulfinic acid (-SO2H) (Cys131). Position 133 is a cysteine sulfenic acid (-SOH) (Cys133).

Belongs to the nitrile hydratase subunit alpha family. Heterododecamer consisting of 4 alpha, 4 beta, and 4 gamma subunits. Requires Co(3+) as cofactor.

The catalysed reaction is thiocyanate + H2O + 2 H(+) = carbonyl sulfide + NH4(+). The protein operates within organosulfur degradation; thiocyanate degradation. Involved in the degradation of thiocyanate. The sequence is that of Thiocyanate hydrolase subunit gamma (scnC) from Thiobacillus thioparus.